The following is a 90-amino-acid chain: Mitochondrial import inner membrane translocase subunit tim10 (90 aa).

The Twin CX3C motif motif lies at 36–61 (CTLKCIDKSYREGDLSKGESVCLDRC). Cystine bridges form between Cys-36/Cys-61 and Cys-40/Cys-57.

It belongs to the small Tim family. As to quaternary structure, heterohexamer; composed of 3 copies of tim9 and 3 copies of tim10, named soluble 70 kDa complex. Associates directly with the TIM22 complex, whose core is composed of tim22 and tim54. Interacts with the transmembrane regions of multi-pass transmembrane proteins in transit.

The protein resides in the mitochondrion inner membrane. Functionally, mitochondrial intermembrane chaperone that participates in the import and insertion of multi-pass transmembrane proteins into the mitochondrial inner membrane. Also required for the transfer of beta-barrel precursors from the TOM complex to the sorting and assembly machinery (SAM complex) of the outer membrane. Acts as a chaperone-like protein that protects the hydrophobic precursors from aggregation and guide them through the mitochondrial intermembrane space. The sequence is that of Mitochondrial import inner membrane translocase subunit tim10 (tim10) from Neurospora crassa (strain ATCC 24698 / 74-OR23-1A / CBS 708.71 / DSM 1257 / FGSC 987).